An 881-amino-acid polypeptide reads, in one-letter code: MGCRPRGPRGQAERAGSRCQYHWPMTNRSRSFNVPDKPSLDGIEAKWVDVWDESGVYHFDRSKSREEIFAIDTPPPTVSGSLHIGHVFSYTHTDTVARFQRMNGKSVFYPMGWDDNGLPTERRVQNYYGVRCDPSIPYDPDFTPPEKPDPKNQVPISRRNFIELCERLTVEDEKVFESIWRRLGLSVDWRYTYATIDDKSRAVAQRAFLRNLARGEAYMAEAPTLWDVTFRTAVAQAELEDRERPGAYHKVAFHRDGGDPIIIATTRPELLPACVALVAHPDDERYQSLFGTTVRSPLFGVEVPVVAHRLADPEKGTGIAMICTFGDVTDVTWWRELKLPTRAIIGWDGRIVADPPEGLDSEEGRAAYAKLAGATVHTARQRIVEMLRESGDLIGEPEKITHPVKFFEKGDKPLEIVTTRQWYIRNGGRDPELREALLKRGQELDWYPEHMRTRFEHWVGGLNGDWLISRQRFFGVPFPVWYPLDDKGNPIYDSPILPDESQLPVDPSSQAPEGYTEDQRGKPGGFIGDPDVMDTWATSSLTPQIAGGWESDPDLFERVFPMDLRPQGQDIIRTWLFSTVVRSHFEHDCLPWKKAAISGWILDPDRKKMSKSKGNVVTPLSMLEKYSSDAVRYWAASGRLGTDTALDEKQMKIGRRLAIKILNASKFALSVAGEDTVADPAAVTEPLDRSMLAVLAEVVQDATAAFHEYDHTRALERTERFFWNLCDDYLELVKARAYDPESREGASARAALLIALSVLHRLFAPFLPFVTEEVWSWWQDGSVHVAKWPSVEEFRAAAEAGDPAVLAATSEVLHTVRKAKSEAKLSMRAEVERVTVHGKQAEQARLCRDDLAAAGRVTTLVFETTDDAELRVDVELAPAEK.

Residues 76–86 (PTVSGSLHIGH) carry the 'HIGH' region motif. The tract at residues 493–526 (DSPILPDESQLPVDPSSQAPEGYTEDQRGKPGGF) is disordered. The short motif at 608–612 (KMSKS) is the 'KMSKS' region element. Residue lysine 611 coordinates ATP.

This sequence belongs to the class-I aminoacyl-tRNA synthetase family. ValS type 2 subfamily. In terms of assembly, monomer.

It localises to the cytoplasm. The enzyme catalyses tRNA(Val) + L-valine + ATP = L-valyl-tRNA(Val) + AMP + diphosphate. Catalyzes the attachment of valine to tRNA(Val). As ValRS can inadvertently accommodate and process structurally similar amino acids such as threonine, to avoid such errors, it has a 'posttransfer' editing activity that hydrolyzes mischarged Thr-tRNA(Val) in a tRNA-dependent manner. The protein is Valine--tRNA ligase of Thermobifida fusca (strain YX).